Reading from the N-terminus, the 86-residue chain is MAKNKDDIKYATAQAKLSEDEAIRVSYKHGTPLEGGKIAESEPVELFSSAQRIEKGKEQSAASGDQTQIQRDIKDIKGTRTDDSPR.

The segment at 52–86 (RIEKGKEQSAASGDQTQIQRDIKDIKGTRTDDSPR) is disordered. Positions 60–70 (SAASGDQTQIQ) are enriched in polar residues. Residues 71-86 (RDIKDIKGTRTDDSPR) are compositionally biased toward basic and acidic residues.

Belongs to the LEA type 3 family.

Protein chaperone involved in seed maturation and dormancy maintenance after high temperature fluctuation (e.g. secondary dormancy after 3 days at 40 degrees Celsius), probably by protecting heat labile proteins required for secondary dormancy (e.g. G6PDH, HOP3, SR45, ECP63, SCL33, RPL32B, ChlADR1, MSBP1, MBF1B, At3g01690, At1g15280, At1g15290, At2g31410, At1g11630, At1g65090, EMB2279, EMB1674 and RPL35C). In Arabidopsis thaliana (Mouse-ear cress), this protein is SEED MATURATION PROTEIN 1.